A 301-amino-acid chain; its full sequence is Acetylglutamate kinase (301 aa).

Substrate-binding positions include 68–69 (GG), R90, and N195.

This sequence belongs to the acetylglutamate kinase family. ArgB subfamily.

It localises to the cytoplasm. The enzyme catalyses N-acetyl-L-glutamate + ATP = N-acetyl-L-glutamyl 5-phosphate + ADP. The protein operates within amino-acid biosynthesis; L-arginine biosynthesis; N(2)-acetyl-L-ornithine from L-glutamate: step 2/4. Catalyzes the ATP-dependent phosphorylation of N-acetyl-L-glutamate. The protein is Acetylglutamate kinase of Pseudomonas fluorescens (strain Pf0-1).